The sequence spans 353 residues: Heat-inducible transcription repressor HrcA (353 aa).

It belongs to the HrcA family.

In terms of biological role, negative regulator of class I heat shock genes (grpE-dnaK-dnaJ and groELS operons). Prevents heat-shock induction of these operons. The polypeptide is Heat-inducible transcription repressor HrcA (Synechococcus elongatus (strain ATCC 33912 / PCC 7942 / FACHB-805) (Anacystis nidulans R2)).